A 274-amino-acid polypeptide reads, in one-letter code: Large ribosomal subunit protein uL2 (274 aa).

Residues 1-23 (MAIKIYRPTSPGRRHHSVSSFEE) form a disordered region.

Belongs to the universal ribosomal protein uL2 family. As to quaternary structure, part of the 50S ribosomal subunit. Forms a bridge to the 30S subunit in the 70S ribosome.

Its function is as follows. One of the primary rRNA binding proteins. Required for association of the 30S and 50S subunits to form the 70S ribosome, for tRNA binding and peptide bond formation. It has been suggested to have peptidyltransferase activity; this is somewhat controversial. Makes several contacts with the 16S rRNA in the 70S ribosome. This Dehalococcoides mccartyi (strain ATCC BAA-2100 / JCM 16839 / KCTC 5957 / BAV1) protein is Large ribosomal subunit protein uL2.